Here is a 226-residue protein sequence, read N- to C-terminus: Histidine biosynthesis bifunctional protein HisIE (226 aa).

The phosphoribosyl-AMP cyclohydrolase stretch occupies residues 1–131 (MMPMNQEFIQ…STFNRPLSNT (131 aa)). The phosphoribosyl-ATP pyrophosphohydrolase stretch occupies residues 132–226 (CSELFEVIKD…KRRQSKSNPK (95 aa)).

It in the N-terminal section; belongs to the PRA-CH family. In the C-terminal section; belongs to the PRA-PH family.

The protein localises to the cytoplasm. It catalyses the reaction 1-(5-phospho-beta-D-ribosyl)-ATP + H2O = 1-(5-phospho-beta-D-ribosyl)-5'-AMP + diphosphate + H(+). The catalysed reaction is 1-(5-phospho-beta-D-ribosyl)-5'-AMP + H2O = 1-(5-phospho-beta-D-ribosyl)-5-[(5-phospho-beta-D-ribosylamino)methylideneamino]imidazole-4-carboxamide. The protein operates within amino-acid biosynthesis; L-histidine biosynthesis; L-histidine from 5-phospho-alpha-D-ribose 1-diphosphate: step 2/9. It functions in the pathway amino-acid biosynthesis; L-histidine biosynthesis; L-histidine from 5-phospho-alpha-D-ribose 1-diphosphate: step 3/9. In Prochlorococcus marinus (strain SARG / CCMP1375 / SS120), this protein is Histidine biosynthesis bifunctional protein HisIE.